The sequence spans 257 residues: Protein CUSTOS (257 aa).

Over residues 1–11 (MSDLESSSSSS) the composition is skewed to low complexity. Positions 1-72 (MSDLESSSSS…HEQDGNELQT (72 aa)) are disordered. Residues 32-41 (QRPRGPEKPG) show a composition bias toward basic and acidic residues. Ser-55 bears the Phosphoserine mark. Thr-73 is modified (phosphothreonine). 2 disordered regions span residues 120-157 (FTSIPGGPEKEAAPQPCRKRLPSSSSSDDGDEELRRCR) and 170-257 (SAIH…VPSN). Composition is skewed to basic residues over residues 180-190 (KKKKRKLKKKA) and 227-237 (TKKKKRKKKTK). A Nucleolar localization signal (NLS) motif is present at residues 228-236 (KKKKRKKKT).

The protein belongs to the CUSTOS family.

The protein localises to the nucleus envelope. Functionally, plays a role in the regulation of Wnt signaling pathway during early development. The chain is Protein CUSTOS from Bos taurus (Bovine).